We begin with the raw amino-acid sequence, 121 residues long: Large ribosomal subunit protein uL14c (121 aa).

This sequence belongs to the universal ribosomal protein uL14 family. In terms of assembly, part of the 50S ribosomal subunit.

Its subcellular location is the plastid. It localises to the chloroplast. In terms of biological role, binds to 23S rRNA. The chain is Large ribosomal subunit protein uL14c from Oedogonium cardiacum (Filamentous green alga).